The following is a 302-amino-acid chain: Pantothenate synthetase (302 aa).

Residue 47–54 (MGALHEGH) coordinates ATP. His-54 (proton donor) is an active-site residue. A (R)-pantoate-binding site is contributed by Gln-79. Residue Gln-79 coordinates beta-alanine. 165–168 (GEKD) lines the ATP pocket. Gln-171 is a binding site for (R)-pantoate. Residues Val-194 and 202-205 (LSSR) contribute to the ATP site.

Belongs to the pantothenate synthetase family. In terms of assembly, homodimer.

The protein localises to the cytoplasm. It carries out the reaction (R)-pantoate + beta-alanine + ATP = (R)-pantothenate + AMP + diphosphate + H(+). Its pathway is cofactor biosynthesis; (R)-pantothenate biosynthesis; (R)-pantothenate from (R)-pantoate and beta-alanine: step 1/1. Functionally, catalyzes the condensation of pantoate with beta-alanine in an ATP-dependent reaction via a pantoyl-adenylate intermediate. This chain is Pantothenate synthetase, found in Saccharopolyspora erythraea (strain ATCC 11635 / DSM 40517 / JCM 4748 / NBRC 13426 / NCIMB 8594 / NRRL 2338).